We begin with the raw amino-acid sequence, 374 residues long: o-succinylbenzoate synthase (374 aa).

Lysine 164 acts as the Proton donor in catalysis. Positions 189, 214, and 239 each coordinate Mg(2+). Residue lysine 263 is the Proton acceptor of the active site.

Belongs to the mandelate racemase/muconate lactonizing enzyme family. MenC type 2 subfamily. Homodimer. A divalent metal cation serves as cofactor.

It catalyses the reaction (1R,6R)-6-hydroxy-2-succinyl-cyclohexa-2,4-diene-1-carboxylate = 2-succinylbenzoate + H2O. It participates in quinol/quinone metabolism; 1,4-dihydroxy-2-naphthoate biosynthesis; 1,4-dihydroxy-2-naphthoate from chorismate: step 4/7. The protein operates within quinol/quinone metabolism; menaquinone biosynthesis. Functionally, converts 2-succinyl-6-hydroxy-2,4-cyclohexadiene-1-carboxylate (SHCHC) to 2-succinylbenzoate (OSB). Also acts as a N-succinylamino acid racemase (NSAR) that catalyzes the racemization of N-succinyl-L-phenylglycine. L.innocua has the menaquinone synthesis pathway, indicating that the species requires OSBS activity. However, the NSAR/OSBS is not encoded in the menaquinone operon, raising the possibility that both NSAR and OSBS are biological functions. The polypeptide is o-succinylbenzoate synthase (Listeria innocua serovar 6a (strain ATCC BAA-680 / CLIP 11262)).